The chain runs to 523 residues: Mitochondrial distribution and morphology protein 34 (523 aa).

In terms of domain architecture, SMP-LTD spans 1 to 200 (MSFKVNWKSL…LPTLIHQFSL (200 aa)). Positions 489 to 523 (ELSMDRSGKRKQRNYGSATYESENPIVAPPPPYSH) are disordered.

This sequence belongs to the MDM34 family. Component of the ER-mitochondria encounter structure (ERMES) or MDM complex, composed of MMM1, MDM10, MDM12 and MDM34.

It localises to the mitochondrion outer membrane. Functionally, component of the ERMES/MDM complex, which serves as a molecular tether to connect the endoplasmic reticulum (ER) and mitochondria. Components of this complex are involved in the control of mitochondrial shape and protein biogenesis, and function in nonvesicular lipid trafficking between the ER and mitochondria. MDM34 is required for the interaction of the ER-resident membrane protein MMM1 and the outer mitochondrial membrane-resident beta-barrel protein MDM10. In Scheffersomyces stipitis (strain ATCC 58785 / CBS 6054 / NBRC 10063 / NRRL Y-11545) (Yeast), this protein is Mitochondrial distribution and morphology protein 34.